The primary structure comprises 292 residues: 2-hydroxy-3-oxopropionate reductase (292 aa).

NAD(+)-binding positions include 4–18 (GFIG…MAIN) and S94. Residue K169 is part of the active site. K237 is an NAD(+) binding site.

This sequence belongs to the HIBADH-related family.

The enzyme catalyses (R)-glycerate + NADP(+) = 2-hydroxy-3-oxopropanoate + NADPH + H(+). It carries out the reaction (R)-glycerate + NAD(+) = 2-hydroxy-3-oxopropanoate + NADH + H(+). It participates in organic acid metabolism; glycolate degradation; 3-phospho-D-glycerate from glycolate: step 3/4. This is 2-hydroxy-3-oxopropionate reductase (glxR) from Escherichia coli (strain K12).